The chain runs to 795 residues: Phenylalanine--tRNA ligase beta subunit (795 aa).

The region spanning 39–148 (AGTFNGVVVG…LDAPIGTDLR (110 aa)) is the tRNA-binding domain. Residues 401–476 (PKVNTVQLRR…RIYGYNSIPN (76 aa)) form the B5 domain. The Mg(2+) site is built by aspartate 454, aspartate 460, glutamate 463, and glutamate 464. Positions 701-794 (SKFPANRRDL…VKQRFNAELR (94 aa)) constitute an FDX-ACB domain.

The protein belongs to the phenylalanyl-tRNA synthetase beta subunit family. Type 1 subfamily. In terms of assembly, tetramer of two alpha and two beta subunits. Requires Mg(2+) as cofactor.

Its subcellular location is the cytoplasm. The catalysed reaction is tRNA(Phe) + L-phenylalanine + ATP = L-phenylalanyl-tRNA(Phe) + AMP + diphosphate + H(+). The chain is Phenylalanine--tRNA ligase beta subunit from Haemophilus influenzae (strain 86-028NP).